The primary structure comprises 261 residues: High-affinity zinc uptake system membrane protein ZnuB (261 aa).

7 helical membrane passes run 8-28 (ALLT…FVVW), 54-74 (VNPY…MVWL), 84-104 (TLLG…VGLL), 125-145 (TDLI…IYFW), 171-191 (ILMI…GALI), 214-234 (VGWA…LSAF), and 236-256 (DTAA…LSLF).

The protein belongs to the ABC-3 integral membrane protein family.

The protein localises to the cell inner membrane. In terms of biological role, involved in the high-affinity zinc uptake transport system. In Haemophilus influenzae (strain ATCC 51907 / DSM 11121 / KW20 / Rd), this protein is High-affinity zinc uptake system membrane protein ZnuB (znuB).